The following is a 374-amino-acid chain: Chaperone protein DnaJ (374 aa).

The J domain maps to 5–70; the sequence is DFYEILGVGK…QKRDAYDRYG (66 aa). Residues 29-50 form a disordered region; the sequence is AMKHHPDRNPDSKGAEDKFKEA. Residues 35-50 show a composition bias toward basic and acidic residues; the sequence is DRNPDSKGAEDKFKEA. The segment at 134 to 212 adopts a CR-type zinc-finger fold; it reads GYDTTIRVPS…CSGAGKIKRN (79 aa). Zn(2+) contacts are provided by Cys147, Cys150, Cys164, Cys167, Cys186, Cys189, Cys200, and Cys203. CXXCXGXG motif repeat units lie at residues 147 to 154, 164 to 171, 186 to 193, and 200 to 207; these read CETCDGSG, CTTCGGHG, CPKCHGSG, and CGTCSGAG.

This sequence belongs to the DnaJ family. Homodimer. Zn(2+) is required as a cofactor.

It is found in the cytoplasm. Participates actively in the response to hyperosmotic and heat shock by preventing the aggregation of stress-denatured proteins and by disaggregating proteins, also in an autonomous, DnaK-independent fashion. Unfolded proteins bind initially to DnaJ; upon interaction with the DnaJ-bound protein, DnaK hydrolyzes its bound ATP, resulting in the formation of a stable complex. GrpE releases ADP from DnaK; ATP binding to DnaK triggers the release of the substrate protein, thus completing the reaction cycle. Several rounds of ATP-dependent interactions between DnaJ, DnaK and GrpE are required for fully efficient folding. Also involved, together with DnaK and GrpE, in the DNA replication of plasmids through activation of initiation proteins. In Janthinobacterium sp. (strain Marseille) (Minibacterium massiliensis), this protein is Chaperone protein DnaJ.